Here is a 309-residue protein sequence, read N- to C-terminus: DNA replication terminus site-binding protein (309 aa).

Belongs to the Tus family.

It localises to the cytoplasm. Its function is as follows. Trans-acting protein required for termination of DNA replication. Binds to DNA replication terminator sequences (terA to terF) to prevent the passage of replication forks. The termination efficiency will be affected by the affinity of this protein for the terminator sequence. The protein is DNA replication terminus site-binding protein of Yersinia enterocolitica serotype O:8 / biotype 1B (strain NCTC 13174 / 8081).